The sequence spans 358 residues: Heme A synthase (358 aa).

Helical transmembrane passes span 22–42 (IQVW…VGGA), 107–127 (VLGR…WATK), 133–153 (ILFP…IGWW), 172–192 (LAFH…LSRG), 208–228 (FAAW…LVAG), 269–289 (FIHR…AFYV), 302–322 (AFLI…TLLH), and 324–344 (VPIS…CFAV). His-271 lines the heme pocket. A heme-binding site is contributed by His-332.

The protein belongs to the COX15/CtaA family. Type 2 subfamily. Interacts with CtaB. Requires heme b as cofactor.

It localises to the cell membrane. The enzyme catalyses Fe(II)-heme o + 2 A + H2O = Fe(II)-heme a + 2 AH2. The protein operates within porphyrin-containing compound metabolism; heme A biosynthesis; heme A from heme O: step 1/1. Catalyzes the conversion of heme O to heme A by two successive hydroxylations of the methyl group at C8. The first hydroxylation forms heme I, the second hydroxylation results in an unstable dihydroxymethyl group, which spontaneously dehydrates, resulting in the formyl group of heme A. In Bartonella tribocorum (strain CIP 105476 / IBS 506), this protein is Heme A synthase.